The primary structure comprises 230 residues: Probable methylthioribulose-1-phosphate dehydratase (230 aa).

C87 contributes to the substrate binding site. 2 residues coordinate Zn(2+): H105 and H107. The active-site Proton donor/acceptor is the E129. H185 is a Zn(2+) binding site.

It belongs to the aldolase class II family. MtnB subfamily. The cofactor is Zn(2+).

Its subcellular location is the cytoplasm. It catalyses the reaction 5-(methylsulfanyl)-D-ribulose 1-phosphate = 5-methylsulfanyl-2,3-dioxopentyl phosphate + H2O. Its pathway is amino-acid biosynthesis; L-methionine biosynthesis via salvage pathway; L-methionine from S-methyl-5-thio-alpha-D-ribose 1-phosphate: step 2/6. Functionally, catalyzes the dehydration of methylthioribulose-1-phosphate (MTRu-1-P) into 2,3-diketo-5-methylthiopentyl-1-phosphate (DK-MTP-1-P). The chain is Probable methylthioribulose-1-phosphate dehydratase from Drosophila virilis (Fruit fly).